Here is a 128-residue protein sequence, read N- to C-terminus: MASKATKTTQSKYAIINNQLRNDLPDFTSGDTIKVDVKIKEGEKFRIQTFEGLVIKTQGSGITYSVVVRKLSNGVFVERTFPLHSPIIDKVTIVKRGRVRRARIYYIRKLSGKAARIKEILPTKADKK.

The protein belongs to the bacterial ribosomal protein bL19 family.

In terms of biological role, this protein is located at the 30S-50S ribosomal subunit interface and may play a role in the structure and function of the aminoacyl-tRNA binding site. This Mesoplasma florum (strain ATCC 33453 / NBRC 100688 / NCTC 11704 / L1) (Acholeplasma florum) protein is Large ribosomal subunit protein bL19.